Consider the following 75-residue polypeptide: Defensin-like protein 58 (75 aa).

Residues 1–23 form the signal peptide; the sequence is MNITKRYVVIFFLVMLTKSLSNS. 4 disulfide bridges follow: C39-C73, C43-C66, C52-C71, and C56-C72.

This sequence belongs to the DEFL family.

The protein resides in the secreted. The protein is Defensin-like protein 58 of Arabidopsis thaliana (Mouse-ear cress).